Reading from the N-terminus, the 309-residue chain is tRNA pseudouridine synthase B (309 aa).

Residue D39 is the Nucleophile of the active site.

It belongs to the pseudouridine synthase TruB family. Type 1 subfamily.

It catalyses the reaction uridine(55) in tRNA = pseudouridine(55) in tRNA. In terms of biological role, responsible for synthesis of pseudouridine from uracil-55 in the psi GC loop of transfer RNAs. This Bacillus subtilis (strain 168) protein is tRNA pseudouridine synthase B.